We begin with the raw amino-acid sequence, 101 residues long: Large ribosomal subunit protein uL24 (101 aa).

This sequence belongs to the universal ribosomal protein uL24 family. As to quaternary structure, part of the 50S ribosomal subunit.

Functionally, one of two assembly initiator proteins, it binds directly to the 5'-end of the 23S rRNA, where it nucleates assembly of the 50S subunit. In terms of biological role, one of the proteins that surrounds the polypeptide exit tunnel on the outside of the subunit. The polypeptide is Large ribosomal subunit protein uL24 (Borrelia hermsii (strain HS1 / DAH)).